Consider the following 449-residue polypeptide: MIQTVVVYFSASLTLTLITPNFKSNKDLLFVLLIHYIVFYLSDFYRDFWSRGYLEEFKMVLKYSFYYIFISSSLFFIFKNSFTTTRLSFFTFIAMNSILLYLLNSFLKYYRKYSYAKFSRDTKVVLITNKDSLSKMTFRNKYDHNYIAVCILDSSEKDCYDLKHNSLRIINKDALTSELTCLTVDQAFINIPIELFGKYQIQDIINDIEAMGVIVNVNVEALSFDNIGEKRIQTFEGYSVITYSMKFYKYSHLIAKRFLDITGAIIGLLICGIVAIFLVPQIRKDGGPAIFSQNRVGRNGRIFRFYKFRSMRVDAEQIKKDLLVHNQMTGLMFKLEDDPRITKIGKFIRKTSIDELPQFYNVLKGDMSLVGTRPPTVDEYEKYNSTQKRRLSFKPGITGLWQISGRNNITDFDEIVKLDVQYINEWSIWSDIKIILLTLKVVLLGTGAK.

A run of 5 helical transmembrane segments spans residues 5-22, 27-46, 59-78, 88-107, and 258-280; these read VVVY…TPNF, DLLF…DFYR, MVLK…FFIF, SFFT…NSFL, and FLDI…FLVP.

The protein belongs to the bacterial sugar transferase family.

The protein resides in the cell membrane. In terms of biological role, galactosyl transferase is essential for the assembly of the group B streptococci (GBS) type III capsular polysaccharide. May be involved in the formation of either or both galactosidic bonds by catalyzing the addition of galactose to an oligosaccharide precursor or to a lipid intermediate. Type III capsular polysaccharide consists of a linear backbone with short side chains ending in residues of N-acetylneuraminic acid or sialic acid. The presence of sialic acid on the surface of the organism inhibits activation of the alternative pathway of complement and is thought to be an important element in the virulence function of the capsule. The polypeptide is Galactosyl transferase CpsE (cpsE) (Streptococcus agalactiae serotype III (strain NEM316)).